The chain runs to 298 residues: Glutamyl-Q tRNA(Asp) synthetase (298 aa).

Residues 9-13 (RFAPS) and Glu45 contribute to the L-glutamate site. The short motif at 12 to 22 (PSPSGELHFGS) is the 'HIGH' region element. Zn(2+) is bound by residues Cys101, Cys103, Tyr115, and Cys119. Tyr172 and Arg190 together coordinate L-glutamate. The 'KMSKS' region signature appears at 228–232 (KLSKQ). Lys231 is a binding site for ATP.

The protein belongs to the class-I aminoacyl-tRNA synthetase family. GluQ subfamily. It depends on Zn(2+) as a cofactor.

Functionally, catalyzes the tRNA-independent activation of glutamate in presence of ATP and the subsequent transfer of glutamate onto a tRNA(Asp). Glutamate is transferred on the 2-amino-5-(4,5-dihydroxy-2-cyclopenten-1-yl) moiety of the queuosine in the wobble position of the QUC anticodon. The sequence is that of Glutamyl-Q tRNA(Asp) synthetase from Salmonella choleraesuis (strain SC-B67).